Here is a 486-residue protein sequence, read N- to C-terminus: Ribulose bisphosphate carboxylase large chain 1 (486 aa).

Substrate contacts are provided by N125 and T175. Catalysis depends on K177, which acts as the Proton acceptor. Substrate is bound at residue K179. Mg(2+) contacts are provided by K203, D205, and E206. K203 carries the N6-carboxylysine modification. H295 acts as the Proton acceptor in catalysis. Substrate-binding residues include R296, H328, and S380.

It belongs to the RuBisCO large chain family. Type I subfamily. In terms of assembly, heterohexadecamer of 8 large chains and 8 small chains. It depends on Mg(2+) as a cofactor.

The enzyme catalyses 2 (2R)-3-phosphoglycerate + 2 H(+) = D-ribulose 1,5-bisphosphate + CO2 + H2O. It catalyses the reaction D-ribulose 1,5-bisphosphate + O2 = 2-phosphoglycolate + (2R)-3-phosphoglycerate + 2 H(+). In terms of biological role, ruBisCO catalyzes two reactions: the carboxylation of D-ribulose 1,5-bisphosphate, the primary event in carbon dioxide fixation, as well as the oxidative fragmentation of the pentose substrate. Both reactions occur simultaneously and in competition at the same active site. This is Ribulose bisphosphate carboxylase large chain 1 from Cereibacter sphaeroides (strain ATCC 17025 / ATH 2.4.3) (Rhodobacter sphaeroides).